Here is a 291-residue protein sequence, read N- to C-terminus: Ribosomal protein L11 methyltransferase (291 aa).

S-adenosyl-L-methionine contacts are provided by Thr136, Gly159, Asp181, and Asn228.

Belongs to the methyltransferase superfamily. PrmA family.

The protein resides in the cytoplasm. The enzyme catalyses L-lysyl-[protein] + 3 S-adenosyl-L-methionine = N(6),N(6),N(6)-trimethyl-L-lysyl-[protein] + 3 S-adenosyl-L-homocysteine + 3 H(+). Functionally, methylates ribosomal protein L11. This is Ribosomal protein L11 methyltransferase from Sinorhizobium fredii (strain NBRC 101917 / NGR234).